The sequence spans 116 residues: HTH-type transcriptional regulator AnsR (116 aa).

Residues 6–60 form the HTH cro/C1-type domain; that stretch reads LTELRKKKNWSLQYTADLLGIAKSTYAGYESGYRRPSLEALAMLADLFDTTCDEL. Residues 17–36 constitute a DNA-binding region (H-T-H motif); it reads LQYTADLLGIAKSTYAGYES.

In terms of biological role, transcriptional repressor for the ans operon coding for L-asparaginase and L-aspartase. NH4(+) may influence this repression. The sequence is that of HTH-type transcriptional regulator AnsR (ansR) from Bacillus subtilis (strain 168).